Consider the following 154-residue polypeptide: 6,7-dimethyl-8-ribityllumazine synthase (154 aa).

5-amino-6-(D-ribitylamino)uracil contacts are provided by residues Trp-22, 56 to 58 (AWE), and 80 to 82 (CVI). Residue 85 to 86 (DT) participates in (2S)-2-hydroxy-3-oxobutyl phosphate binding. His-88 serves as the catalytic Proton donor. Asn-113 is a 5-amino-6-(D-ribitylamino)uracil binding site. Arg-127 provides a ligand contact to (2S)-2-hydroxy-3-oxobutyl phosphate.

Belongs to the DMRL synthase family. In terms of assembly, forms an icosahedral capsid composed of 60 subunits, arranged as a dodecamer of pentamers.

The catalysed reaction is (2S)-2-hydroxy-3-oxobutyl phosphate + 5-amino-6-(D-ribitylamino)uracil = 6,7-dimethyl-8-(1-D-ribityl)lumazine + phosphate + 2 H2O + H(+). The protein operates within cofactor biosynthesis; riboflavin biosynthesis; riboflavin from 2-hydroxy-3-oxobutyl phosphate and 5-amino-6-(D-ribitylamino)uracil: step 1/2. Functionally, catalyzes the formation of 6,7-dimethyl-8-ribityllumazine by condensation of 5-amino-6-(D-ribitylamino)uracil with 3,4-dihydroxy-2-butanone 4-phosphate. This is the penultimate step in the biosynthesis of riboflavin. The sequence is that of 6,7-dimethyl-8-ribityllumazine synthase from Xanthomonas campestris pv. campestris (strain 8004).